A 309-amino-acid polypeptide reads, in one-letter code: Protein RTM1 (309 aa).

Helical transmembrane passes span alanine 22–tryptophan 42, threonine 83–alanine 103, isoleucine 119–phenylalanine 139, phenylalanine 162–alanine 182, leucine 193–phenylalanine 213, tryptophan 233–valine 253, and alanine 278–phenylalanine 298.

It belongs to the lipid-translocating exporter (LTE) (TC 9.A.26.1) family.

The protein localises to the membrane. Functionally, confers resistance to molasses (to a particular toxic element present in some molasses). This chain is Protein RTM1 (RTM1), found in Saccharomyces cerevisiae (Baker's yeast).